Consider the following 562-residue polypeptide: Urocanate hydratase (562 aa).

NAD(+)-binding positions include 53-54 (GG), Gln131, 177-179 (GMG), Glu197, Arg202, 243-244 (NA), 268-272 (QTSAH), 278-279 (YL), and Tyr327. Cys415 is an active-site residue. Gly497 contributes to the NAD(+) binding site.

Belongs to the urocanase family. NAD(+) serves as cofactor.

The protein resides in the cytoplasm. The catalysed reaction is 4-imidazolone-5-propanoate = trans-urocanate + H2O. It functions in the pathway amino-acid degradation; L-histidine degradation into L-glutamate; N-formimidoyl-L-glutamate from L-histidine: step 2/3. In terms of biological role, catalyzes the conversion of urocanate to 4-imidazolone-5-propionate. This is Urocanate hydratase from Chelativorans sp. (strain BNC1).